The primary structure comprises 409 residues: Terpredoxin reductase (409 aa).

Position 7–38 (7–38) interacts with FAD; it reads TTVIVGAGHAGTAAAFFLREFGYHGRVLLLSA. Position 151–159 (151–159) interacts with NAD(+); the sequence is GGGFIGLEI.

The cofactor is FAD.

In terms of biological role, the oxidation of alpha-terpineol by cytochrome p450-TERP requires the participation of a flavoprotein, terpredoxin reductase, and an iron-sulfur protein, terpredoxin, to mediate the transfer of electrons from NADH to P450 for oxygen activation. This chain is Terpredoxin reductase (terPA), found in Pseudomonas sp.